The primary structure comprises 159 residues: Phosphopantetheine adenylyltransferase (159 aa).

A substrate-binding site is contributed by Thr-9. Residues 9 to 10 and His-17 each bind ATP; that span reads TF. Residues Lys-41, Leu-73, and Arg-87 each coordinate substrate. Residues 88 to 90, Glu-98, and 123 to 129 contribute to the ATP site; these read GLR and YAFLSST.

It belongs to the bacterial CoaD family. In terms of assembly, homohexamer. Requires Mg(2+) as cofactor.

The protein localises to the cytoplasm. The enzyme catalyses (R)-4'-phosphopantetheine + ATP + H(+) = 3'-dephospho-CoA + diphosphate. It functions in the pathway cofactor biosynthesis; coenzyme A biosynthesis; CoA from (R)-pantothenate: step 4/5. In terms of biological role, reversibly transfers an adenylyl group from ATP to 4'-phosphopantetheine, yielding dephospho-CoA (dPCoA) and pyrophosphate. This is Phosphopantetheine adenylyltransferase from Vibrio campbellii (strain ATCC BAA-1116).